Reading from the N-terminus, the 657-residue chain is Keratinocyte proline-rich protein (657 aa).

Disordered stretches follow at residues 285 to 320, 425 to 493, and 517 to 568; these read QGTYGSYTSQRRSQSTSRCLPPRRLQPSYRSCSPPR, HPFP…PSPE, and QPVP…CGQP. The span at 292 to 302 shows a compositional bias: low complexity; the sequence is TSQRRSQSTSR. A compositionally biased stretch (basic and acidic residues) spans 434 to 444; that stretch reads QHLDRSPESSR. Serine 442 bears the Phosphoserine mark. Composition is skewed to pro residues over residues 449 to 493, 517 to 530, and 539 to 561; these read VPAP…PSPE, QPVPHPAPRPVPRP, and GPRPQPCPLPHPEPMPRPAPCSS.

It is found in the cytoplasm. The chain is Keratinocyte proline-rich protein from Mus musculus (Mouse).